Reading from the N-terminus, the 253-residue chain is Small ribosomal subunit protein uS2 (253 aa).

Serine 2 bears the N-acetylserine mark. The tract at residues glutamine 212 to tryptophan 253 is disordered. Residues alanine 219–glutamate 238 show a composition bias toward acidic residues.

It belongs to the universal ribosomal protein uS2 family. As to quaternary structure, component of the small ribosomal subunit. Mature ribosomes consist of a small (40S) and a large (60S) subunit. The 40S subunit contains about 33 different proteins and 1 molecule of RNA (18S). The 60S subunit contains about 49 different proteins and 3 molecules of RNA (25S, 5.8S and 5S). Interacts with RPS21.

It localises to the cytoplasm. In terms of biological role, required for the assembly and/or stability of the 40S ribosomal subunit. Required for the processing of the 20S rRNA-precursor to mature 18S rRNA in a late step of the maturation of 40S ribosomal subunits. This chain is Small ribosomal subunit protein uS2, found in Eremothecium gossypii (strain ATCC 10895 / CBS 109.51 / FGSC 9923 / NRRL Y-1056) (Yeast).